We begin with the raw amino-acid sequence, 231 residues long: Ribonuclease 3 (231 aa).

The 130-residue stretch at 6–135 folds into the RNase III domain; it reads AAMLKERFGI…FVGALYLDQG (130 aa). E48 contributes to the Mg(2+) binding site. D52 is an active-site residue. Residues D121 and E124 each coordinate Mg(2+). E124 is an active-site residue. A DRBM domain is found at 161 to 230; it reads DYKTTLQEYL…ARQAYSQLQQ (70 aa). A disordered region spans residues 209 to 231; it reads WGHSKKEAEQSAARQAYSQLQQK. The segment covering 220–231 has biased composition (polar residues); it reads AARQAYSQLQQK.

This sequence belongs to the ribonuclease III family. Homodimer. The cofactor is Mg(2+).

Its subcellular location is the cytoplasm. The catalysed reaction is Endonucleolytic cleavage to 5'-phosphomonoester.. Its function is as follows. Digests double-stranded RNA. Involved in the processing of primary rRNA transcript to yield the immediate precursors to the large and small rRNAs (23S and 16S). Processes some mRNAs, and tRNAs when they are encoded in the rRNA operon. Processes pre-crRNA and tracrRNA of type II CRISPR loci if present in the organism. The polypeptide is Ribonuclease 3 (Lactiplantibacillus plantarum (strain ATCC BAA-793 / NCIMB 8826 / WCFS1) (Lactobacillus plantarum)).